We begin with the raw amino-acid sequence, 226 residues long: ATP-dependent dethiobiotin synthetase BioD (226 aa).

14-19 contributes to the ATP binding site; that stretch reads GIGKTF. T18 is a Mg(2+) binding site. The active site involves K39. S43 lines the substrate pocket. Residues D56, 117 to 120, 177 to 178, 206 to 208, and N213 each bind ATP; these read EGVG, NT, and PHI. Mg(2+)-binding residues include D56 and E117.

The protein belongs to the dethiobiotin synthetase family. As to quaternary structure, homodimer. Requires Mg(2+) as cofactor.

The protein localises to the cytoplasm. The catalysed reaction is (7R,8S)-7,8-diammoniononanoate + CO2 + ATP = (4R,5S)-dethiobiotin + ADP + phosphate + 3 H(+). Its pathway is cofactor biosynthesis; biotin biosynthesis; biotin from 7,8-diaminononanoate: step 1/2. Functionally, catalyzes a mechanistically unusual reaction, the ATP-dependent insertion of CO2 between the N7 and N8 nitrogen atoms of 7,8-diaminopelargonic acid (DAPA, also called 7,8-diammoniononanoate) to form a ureido ring. This Xylella fastidiosa (strain M12) protein is ATP-dependent dethiobiotin synthetase BioD.